Reading from the N-terminus, the 205-residue chain is Putative 3-methyladenine DNA glycosylase (205 aa).

This sequence belongs to the DNA glycosylase MPG family.

The protein is Putative 3-methyladenine DNA glycosylase of Clostridium perfringens (strain 13 / Type A).